Here is a 332-residue protein sequence, read N- to C-terminus: Ketol-acid reductoisomerase (NADP(+)) (332 aa).

The region spanning 2–182 is the KARI N-terminal Rossmann domain; that stretch reads AKVYHDTEVS…GATRAGVLET (181 aa). NADP(+) contacts are provided by residues 25-28, arginine 48, serine 53, and 83-86; these read YGSQ and DTEQ. Histidine 108 is an active-site residue. Residue glycine 134 coordinates NADP(+). The 146-residue stretch at 183-328 folds into the KARI C-terminal knotted domain; it reads TFKEETETDL…KVLREMMPWL (146 aa). 4 residues coordinate Mg(2+): aspartate 191, glutamate 195, glutamate 227, and glutamate 231. Substrate is bound at residue serine 252.

The protein belongs to the ketol-acid reductoisomerase family. Mg(2+) serves as cofactor.

The enzyme catalyses (2R)-2,3-dihydroxy-3-methylbutanoate + NADP(+) = (2S)-2-acetolactate + NADPH + H(+). It catalyses the reaction (2R,3R)-2,3-dihydroxy-3-methylpentanoate + NADP(+) = (S)-2-ethyl-2-hydroxy-3-oxobutanoate + NADPH + H(+). Its pathway is amino-acid biosynthesis; L-isoleucine biosynthesis; L-isoleucine from 2-oxobutanoate: step 2/4. The protein operates within amino-acid biosynthesis; L-valine biosynthesis; L-valine from pyruvate: step 2/4. Involved in the biosynthesis of branched-chain amino acids (BCAA). Catalyzes an alkyl-migration followed by a ketol-acid reduction of (S)-2-acetolactate (S2AL) to yield (R)-2,3-dihydroxy-isovalerate. In the isomerase reaction, S2AL is rearranged via a Mg-dependent methyl migration to produce 3-hydroxy-3-methyl-2-ketobutyrate (HMKB). In the reductase reaction, this 2-ketoacid undergoes a metal-dependent reduction by NADPH to yield (R)-2,3-dihydroxy-isovalerate. The protein is Ketol-acid reductoisomerase (NADP(+)) of Dictyoglomus turgidum (strain DSM 6724 / Z-1310).